The primary structure comprises 172 residues: Probable metallophosphoesterase MTH_1774 (172 aa).

A divalent metal cation contacts are provided by D8, H10, D37, N59, H85, H113, and H115.

The protein belongs to the metallophosphoesterase superfamily. YfcE family. A divalent metal cation serves as cofactor.

This chain is Probable metallophosphoesterase MTH_1774, found in Methanothermobacter thermautotrophicus (strain ATCC 29096 / DSM 1053 / JCM 10044 / NBRC 100330 / Delta H) (Methanobacterium thermoautotrophicum).